The following is a 124-amino-acid chain: Large ribosomal subunit protein bL19 (124 aa).

The protein belongs to the bacterial ribosomal protein bL19 family.

Its function is as follows. This protein is located at the 30S-50S ribosomal subunit interface and may play a role in the structure and function of the aminoacyl-tRNA binding site. The sequence is that of Large ribosomal subunit protein bL19 from Orientia tsutsugamushi (strain Boryong) (Rickettsia tsutsugamushi).